The following is a 319-amino-acid chain: N-acyl-aromatic-L-amino acid amidohydrolase (carboxylate-forming) (319 aa).

Residues 1 to 210 are hydrolytic domain; the sequence is MCSLPGSRKP…SILDFIELFN (210 aa). Zn(2+) contacts are provided by His21 and Glu24. Substrate-binding positions include Arg63 and 70–71; that span reads NR. His116 serves as a coordination point for Zn(2+). Glu178 and Tyr288 together coordinate substrate. The tract at residues 211 to 318 is shielding domain; it reads QGMEFPAFEM…PGLTPSSTQT (108 aa). The residue at position 318 (Thr318) is a Phosphothreonine.

This sequence belongs to the AspA/AstE family. Aspartoacylase subfamily. In terms of assembly, exists as a mixture of homodimers and homotetramer, both catalytically active. Zn(2+) is required as a cofactor.

The protein localises to the apical cell membrane. The protein resides in the cytoplasm. It catalyses the reaction an N-acyl-aromatic L-alpha-amino acid + H2O = an aromatic L-alpha-amino acid + a carboxylate. The enzyme catalyses an N-acetyl-L-cysteine-S-conjugate + H2O = an S-substituted L-cysteine + acetate. Plays an important role in deacetylating mercapturic acids in kidney proximal tubules. Also acts on N-acetyl-aromatic amino acids. This Rattus norvegicus (Rat) protein is N-acyl-aromatic-L-amino acid amidohydrolase (carboxylate-forming) (Acy3).